The chain runs to 271 residues: Short-chain dehydrogenase/reductase SAT3 (271 aa).

Ser-17, Asp-40, and Asn-67 together coordinate NADP(+). The active-site Proton donor is the Ser-153. 3 residues coordinate NADP(+): Tyr-168, Lys-172, and Ser-203. Residue Tyr-168 is the Proton acceptor of the active site. Lys-172 (lowers pKa of active site Tyr) is an active-site residue.

Belongs to the short-chain dehydrogenases/reductases (SDR) family.

It participates in mycotoxin biosynthesis. Short-chain dehydrogenase/reductase; part of the satratoxin SC1 cluster involved in the biosynthesis of satratoxins, trichothecene mycotoxins that are associated with human food poisonings. Satratoxins are suggested to be made by products of multiple gene clusters (SC1, SC2 and SC3) that encode 21 proteins in all, including polyketide synthases, acetyltransferases, and other enzymes expected to modify the trichothecene skeleton. SC1 encodes 10 proteins, SAT1 to SAT10. The largest are SAT8, which encodes a putative polyketide synthase (PKS) with a conventional non-reducing architecture, and SAT10, a putative protein containing four ankyrin repeats and thus may be involved in protein scaffolding. The putative short-chain reductase SAT3 may assist the PKS in some capacity. SAT6 contains a secretory lipase domain and acts probably as a trichothecene esterase. SAT5 encodes a putative acetyltransferase, and so, with SAT6, may affect endogenous protection from toxicity. The probable transcription factor SAT9 may regulate the expression of the SC1 cluster. SC2 encodes proteins SAT11 to SAT16, the largest of which encodes the putative reducing PKS SAT13. SAT11 is a cytochrome P450 monooxygenase, while SAT14 and SAT16 are probable acetyltransferases. The SC2 cluster may be regulated by the transcription factor SAT15. SC3 is a small cluster that encodes 5 proteins, SAT17 to SAT21. SAT21 is a putative MFS-type transporter which may have a role in exporting secondary metabolites. The four other proteins putatively encoded in SC3 include the taurine hydroxylase-like protein SAT17, the O-methyltransferase SAT18, the acetyltransferase SAT19, and the Cys6-type zinc finger SAT20, the latter being probably involved in regulation of SC3 expression. The protein is Short-chain dehydrogenase/reductase SAT3 of Stachybotrys chartarum (strain CBS 109288 / IBT 7711) (Toxic black mold).